Here is a 109-residue protein sequence, read N- to C-terminus: Cell division protein FtsL (109 aa).

The Cytoplasmic portion of the chain corresponds to 1–3 (MSR). The helical transmembrane segment at 4-21 (LNIFLLIIVMGCALSVVN) threads the bilayer. Topologically, residues 22-109 (STNQQRQIFI…ASAAPTGGAR (88 aa)) are periplasmic.

This sequence belongs to the FtsL family. In terms of assembly, part of a complex composed of FtsB, FtsL and FtsQ.

Its subcellular location is the cell inner membrane. Its function is as follows. Essential cell division protein. May link together the upstream cell division proteins, which are predominantly cytoplasmic, with the downstream cell division proteins, which are predominantly periplasmic. The chain is Cell division protein FtsL from Burkholderia pseudomallei (strain K96243).